Consider the following 253-residue polypeptide: Patatin-like phospholipase domain-containing protein 4 (253 aa).

One can recognise a PNPLA domain in the interval 6–176 (LSFAACGFLG…TNALPILPVG (171 aa)). The GXSXG signature appears at 41-45 (GASAG). The active-site Nucleophile is the S43. D163 functions as the Proton acceptor in the catalytic mechanism. Positions 163–165 (DGG) match the DGA/G motif.

As to expression, expressed in all tissues examined, including heart, brain, placenta, lung, liver, muscle, kidney, pancreas and spleen.

Its subcellular location is the mitochondrion. It carries out the reaction a triacylglycerol + H2O = a diacylglycerol + a fatty acid + H(+). The enzyme catalyses a 1,2-diacyl-sn-glycero-3-phosphocholine + H2O = a 1-acyl-sn-glycero-3-phosphocholine + a fatty acid + H(+). The catalysed reaction is an all-trans-retinyl ester + H2O = all-trans-retinol + a fatty acid + H(+). It catalyses the reaction 2 a 1-acylglycerol = a 1,2-diacylglycerol + glycerol. It carries out the reaction a 1-acylglycerol + a 1,2-diacylglycerol = a triacylglycerol + glycerol. The enzyme catalyses a 1-acylglycerol + a 1,3-diacylglycerol = a triacylglycerol + glycerol. The catalysed reaction is a triacylglycerol + H2O = a 1,2-diacylglycerol + a fatty acid + H(+). It catalyses the reaction a triacylglycerol + H2O = a 1,3-diacylglycerol + a fatty acid + H(+). It carries out the reaction a triacylglycerol + all-trans-retinol = an all-trans-retinyl ester + a diacylglycerol. The enzyme catalyses 2 1-(9Z-octadecenoyl)-glycerol = 1,2-di-(9Z-octadecenoyl)-glycerol + glycerol. The catalysed reaction is 1-(9Z-octadecenoyl)-glycerol + 1,2-di-(9Z-octadecenoyl)-glycerol = 1,2,3-tri-(9Z-octadecenoyl)-glycerol + glycerol. It catalyses the reaction 1-(9Z-octadecenoyl)-glycerol + 1,3-di-(9Z-octadecenoyl)-glycerol = 1,2,3-tri-(9Z-octadecenoyl)-glycerol + glycerol. It carries out the reaction 1,2-di-(9Z-octadecenoyl)-glycerol + (9Z)-octadecenoate + H(+) = 1,2,3-tri-(9Z-octadecenoyl)-glycerol + H2O. The enzyme catalyses 1,2,3-tri-(9Z-octadecenoyl)-glycerol + H2O = 1,3-di-(9Z-octadecenoyl)-glycerol + (9Z)-octadecenoate + H(+). The catalysed reaction is all-trans-retinyl hexadecanoate + H2O = all-trans-retinol + hexadecanoate + H(+). It catalyses the reaction 1,2,3-tri-(9Z-octadecenoyl)-glycerol + all-trans-retinol = all-trans-retinyl 9Z-octadecenoate + di-(9Z)-octadecenoylglycerol. With respect to regulation, the triglyceride lipase activity is inhibited by BEL ((E)-6-(bromomethylene)-3-(1-naphthalenyl)-2H-tetrahydropyran-2-one), a suicide substrate inhibitor. In terms of biological role, has abundant triacylglycerol lipase activity. Transfers fatty acid from triglyceride to retinol, hydrolyzes retinylesters, and generates 1,3-diacylglycerol from triglycerides. Additionally possesses acylglycerol transacylase and phospholipase A2 activities. The protein is Patatin-like phospholipase domain-containing protein 4 of Homo sapiens (Human).